A 670-amino-acid chain; its full sequence is E3 ubiquitin-protein ligase TRAF7 (670 aa).

2 disordered regions span residues 1-37 and 49-97; these read MSSGKSARYNRFSGGPSNLPTPDVTTGTRMETTFGPA and GTST…SLHS. Polar residues-rich tracts occupy residues 15–31 and 49–67; these read GPSNLPTPDVTTGTRME and GTSTYKQHCRTPSSSSTLA. Residues Ser61, Ser88, and Ser91 each carry the phosphoserine modification. The RING-type zinc finger occupies 131–165; that stretch reads CQLCCSVFKDPVITTCGHTFCRRCALKSEKCPVDN. The TRAF-type zinc-finger motif lies at 222–276; it reads HEGSCDYRPVRCPNNPSCPPLLRMNLEAHLKECEHIKCPHSKYGCTFIGNQDTYE. WD repeat units follow at residues 394-433, 437-474, 477-513, 515-554, 557-594, 597-638, and 641-669; these read GHQGPVWCLCVYSMGDLLFSGSSDKTIKVWDTCTTYKCQK, GHDGIVLALCIQGCKLYSGSADCTIIVWDIQNLQKVNT, AHDNPVCTLVSSHNVLFSGSLKAIKVWDIVGTELKLK, ELTGLNHWVRALVAAQSYLYSGSYQTIKIWDIRTLDCIHV, TSGGSVYSIAVTNHHIVCGTYENLIHVWDIESKEQVRT, GHVG…CTQT, and RHQGSVTALAVSRGRLFSGAVDSTVKVWT.

Belongs to the WD repeat TRAF7 family. Homodimer. Interacts with MAP3K3 and promotes the kinase activity of this enzyme. Post-translationally, phosphorylated by MAP3K3. Ubiquitinates itself upon phosphorylation. As to expression, ubiquitously expressed with high levels in skeletal muscle, heart, colon, spleen, kidney, liver and placenta.

It localises to the cytoplasmic vesicle. The protein localises to the cytoplasm. It is found in the nucleus. It catalyses the reaction S-ubiquitinyl-[E2 ubiquitin-conjugating enzyme]-L-cysteine + [acceptor protein]-L-lysine = [E2 ubiquitin-conjugating enzyme]-L-cysteine + N(6)-ubiquitinyl-[acceptor protein]-L-lysine.. It functions in the pathway protein modification; protein ubiquitination. Functionally, E3 ubiquitin and SUMO-protein ligase that plays a role in different biological processes such as innate immunity, inflammation or apoptosis. Potentiates MAP3K3-mediated activation of JUN/AP1 and DDIT3 transcriptional regulators. Negatively regulates MYB transcriptional activity by sequestering it to the cytosol via SUMOylation. Plays a role in the phosphorylation of MAPK1 and/or MAPK3, probably via its interaction with MAP3K3. Negatively regulates RLR-mediated innate immunity by promoting 'Lys-48'-linked ubiquitination of TBK1 through its RING domain to inhibit the cellular antiviral response. Promotes 'Lys-29'-linked polyubiquitination of NEMO/IKBKG and RELA leading to targeting these two proteins to lysosomal degradative pathways, reducing the transcriptional activity of NF-kappa-B. This Homo sapiens (Human) protein is E3 ubiquitin-protein ligase TRAF7 (TRAF7).